The primary structure comprises 412 residues: Mitochondrial distribution and morphology protein 12 (412 aa).

The SMP-LTD domain maps to 1–410 (MSIDLEWAKL…FPNFHTLVMG (410 aa)). 4 disordered regions span residues 66 to 96 (EDDEDDSSTSPVKVTEGQLDAHGGEDDDGYE), 108 to 136 (YTEGGGHGGNGSHLPMHLRHPPLRSSPTD), 166 to 238 (QGSG…QQEN), and 314 to 354 (PAGD…KPLP). The span at 220 to 238 (NQPVFPSQQPQQQQPQQEN) shows a compositional bias: low complexity.

The protein belongs to the MDM12 family. In terms of assembly, component of the ER-mitochondria encounter structure (ERMES) or MDM complex, composed of MMM1, MDM10, MDM12 and MDM34. An MMM1 homodimer associates with one molecule of MDM12 on each side in a pairwise head-to-tail manner, and the SMP-LTD domains of MMM1 and MDM12 generate a continuous hydrophobic tunnel for phospholipid trafficking.

The protein resides in the mitochondrion outer membrane. It is found in the endoplasmic reticulum membrane. In terms of biological role, component of the ERMES/MDM complex, which serves as a molecular tether to connect the endoplasmic reticulum (ER) and mitochondria. Components of this complex are involved in the control of mitochondrial shape and protein biogenesis, and function in nonvesicular lipid trafficking between the ER and mitochondria. MDM12 is required for the interaction of the ER-resident membrane protein MMM1 and the outer mitochondrial membrane-resident beta-barrel protein MDM10. The MDM12-MMM1 subcomplex functions in the major beta-barrel assembly pathway that is responsible for biogenesis of all mitochondrial outer membrane beta-barrel proteins, and acts in a late step after the SAM complex. The MDM10-MDM12-MMM1 subcomplex further acts in the TOM40-specific pathway after the action of the MDM12-MMM1 complex. Essential for establishing and maintaining the structure of mitochondria and maintenance of mtDNA nucleoids. This Coprinopsis cinerea (strain Okayama-7 / 130 / ATCC MYA-4618 / FGSC 9003) (Inky cap fungus) protein is Mitochondrial distribution and morphology protein 12.